We begin with the raw amino-acid sequence, 430 residues long: Aspartate aminotransferase, mitochondrial (430 aa).

Residues Met1 to Ala29 constitute a mitochondrion transit peptide. The residue at position 48 (Thr48) is a Phosphothreonine. Lys59 carries the N6-acetyllysine modification. Gly65 provides a ligand contact to substrate. Position 73 is an N6-acetyllysine; alternate (Lys73). Lys73 bears the N6-succinyllysine; alternate mark. N6-acetyllysine is present on Lys82. Residue Lys90 is modified to N6-acetyllysine; alternate. Position 90 is an N6-succinyllysine; alternate (Lys90). The residue at position 96 (Tyr96) is a 3'-nitrotyrosine; alternate. Position 96 is a phosphotyrosine; alternate (Tyr96). An N6-acetyllysine; alternate mark is found at Lys107 and Lys122. Lys107 and Lys122 each carry N6-succinyllysine; alternate. Phosphoserine is present on Ser143. N6-acetyllysine; alternate is present on Lys159. Residue Lys159 is modified to N6-succinyllysine; alternate. Position 162 (Trp162) interacts with substrate. At Lys185 the chain carries N6-acetyllysine; alternate. Lys185 is subject to N6-succinyllysine; alternate. Asn215 provides a ligand contact to substrate. N6-succinyllysine is present on Lys227. At Lys234 the chain carries N6-acetyllysine. Lys279 and Lys296 each carry N6-acetyllysine; alternate. The residue at position 279 (Lys279) is an N6-(pyridoxal phosphate)lysine; alternate. Lys296 bears the N6-succinyllysine; alternate mark. An N6-acetyllysine modification is found at Lys302. The residue at position 309 (Lys309) is an N6-acetyllysine; alternate. N6-succinyllysine; alternate is present on Lys309. Arg313 is subject to Asymmetric dimethylarginine. Lys338 carries the post-translational modification N6-acetyllysine; alternate. Lys338 carries the N6-succinyllysine; alternate modification. Residue Lys345 is modified to N6-acetyllysine. N6-acetyllysine; alternate is present on Lys363. At Lys363 the chain carries N6-succinyllysine; alternate. N6-acetyllysine is present on residues Lys364 and Lys387. N6-acetyllysine; alternate is present on residues Lys396 and Lys404. Residues Lys396 and Lys404 each carry the N6-succinyllysine; alternate modification. Arg407 contacts substrate.

The protein belongs to the class-I pyridoxal-phosphate-dependent aminotransferase family. Homodimer. Requires pyridoxal 5'-phosphate as cofactor.

The protein localises to the mitochondrion matrix. It is found in the cell membrane. It carries out the reaction L-aspartate + 2-oxoglutarate = oxaloacetate + L-glutamate. It catalyses the reaction L-kynurenine + 2-oxoglutarate = 4-(2-aminophenyl)-2,4-dioxobutanoate + L-glutamate. Catalyzes the irreversible transamination of the L-tryptophan metabolite L-kynurenine to form kynurenic acid (KA). As a member of the malate-aspartate shuttle, it has a key role in the intracellular NAD(H) redox balance. Is important for metabolite exchange between mitochondria and cytosol, and for amino acid metabolism. Facilitates cellular uptake of long-chain free fatty acids. In Bos taurus (Bovine), this protein is Aspartate aminotransferase, mitochondrial (GOT2).